The sequence spans 1259 residues: Protein retinal degeneration B (1259 aa).

Positions 268-378 (GGGEECSDDS…SKGALHSPVG (111 aa)) are disordered. Residues Ser274 and Ser277 each carry the phosphoserine modification. Residues 284–293 (STAATAASTT) are compositionally biased toward low complexity. A compositionally biased stretch (acidic residues) spans 318–335 (SSDEEGEEEEDDDEDEND). A compositionally biased stretch (low complexity) spans 347–363 (QGGSAQRSRSQSIQMAQ). 3 positions are modified to phosphoserine: Ser401, Ser403, and Ser434. 3 disordered regions span residues 427 to 454 (LLGE…GNSR), 472 to 500 (RGNK…STPS), and 660 to 692 (SQPG…NSRL). Positions 663 to 678 (GTASGASNSGGDAATN) are enriched in low complexity. Residues 679–689 (INTHNPLSPRN) are compositionally biased toward polar residues. In terms of domain architecture, DDHD spans 730-913 (LDFEVCDFFM…IAFILRQIGK (184 aa)).

Belongs to the PtdIns transfer protein family. PI transfer class IIA subfamily. As to expression, expressed in adult heads, not detected in bodies.

The catalysed reaction is a 1,2-diacyl-sn-glycero-3-phospho-(1D-myo-inositol)(in) = a 1,2-diacyl-sn-glycero-3-phospho-(1D-myo-inositol)(out). It catalyses the reaction a 1,2-diacyl-sn-glycero-3-phosphate(in) = a 1,2-diacyl-sn-glycero-3-phosphate(out). Catalyzes the transfer of phosphatidylinositol (PI) and phosphatidic acid (PA) between membranes. May control phosphatidylinositol concentration in transport vesicles from the subrhabdomeric cisternae (SRC) to the rhabdomere. May function as a calcium transporter. This is Protein retinal degeneration B (rdgB) from Drosophila melanogaster (Fruit fly).